The sequence spans 95 residues: Small ribosomal subunit protein bS20 (95 aa).

This sequence belongs to the bacterial ribosomal protein bS20 family.

Binds directly to 16S ribosomal RNA. This Ehrlichia ruminantium (strain Gardel) protein is Small ribosomal subunit protein bS20.